The primary structure comprises 218 residues: CTP-dependent diacylglycerol kinase 1 (218 aa).

The Lumenal segment spans residues methionine 1–lysine 19. The helical transmembrane segment at alanine 20–tyrosine 37 threads the bilayer. A topological domain (cytoplasmic) is located at residue histidine 38. Residues alanine 39–isoleucine 59 form a helical membrane-spanning segment. The Lumenal portion of the chain corresponds to arginine 60–glycine 88. The chain crosses the membrane as a helical span at residues valine 89 to valine 109. The Cytoplasmic segment spans residues methionine 110–leucine 142. Residues alanine 143 to phenylalanine 163 traverse the membrane as a helical segment. At arginine 164–proline 179 the chain is on the lumenal side. 2 helical membrane passes run tryptophan 180–leucine 200 and aspartate 201–isoleucine 217. Residue methionine 218 is a topological domain, lumenal.

It belongs to the DGK1 family. Ca(2+) is required as a cofactor. The cofactor is Mg(2+).

It is found in the endoplasmic reticulum membrane. It localises to the nucleus membrane. It carries out the reaction a 1,2-diacyl-sn-glycerol + CTP = a 1,2-diacyl-sn-glycero-3-phosphate + CDP + H(+). CTP-dependent diacylglycerol kinase that catalyzes the phosphorylation of diacylglycerol (DAG) to phosphatidate (PA). Controls phosphatidate levels at the nuclear envelope. Counteracts the activity of PA phosphatase ned1. May be involved in vesicle trafficking between the endoplasmic reticulum and the Golgi apparatus. Involved in pre-tRNA splicing. The sequence is that of CTP-dependent diacylglycerol kinase 1 (ptp4) from Schizosaccharomyces pombe (strain 972 / ATCC 24843) (Fission yeast).